Reading from the N-terminus, the 354-residue chain is Protein-glutamate methylesterase/protein-glutamine glutaminase of group 3 operon (354 aa).

The Response regulatory domain maps to 3 to 121 (RILLATSTVE…MQLEQPAIEK (119 aa)). A CheB-type methylesterase domain is found at 158–340 (PIGIVGIAAS…LESIAENITA (183 aa)). Residues S167, H194, and D287 contribute to the active site.

Belongs to the CheB family.

Its subcellular location is the cytoplasm. The catalysed reaction is [protein]-L-glutamate 5-O-methyl ester + H2O = L-glutamyl-[protein] + methanol + H(+). The enzyme catalyses L-glutaminyl-[protein] + H2O = L-glutamyl-[protein] + NH4(+). Involved in chemotaxis. Part of a chemotaxis signal transduction system that modulates chemotaxis in response to various stimuli. Catalyzes the demethylation of specific methylglutamate residues introduced into the chemoreceptors (methyl-accepting chemotaxis proteins or MCP) by CheR. Also mediates the irreversible deamidation of specific glutamine residues to glutamic acid. The sequence is that of Protein-glutamate methylesterase/protein-glutamine glutaminase of group 3 operon from Rhizobium meliloti (strain 1021) (Ensifer meliloti).